We begin with the raw amino-acid sequence, 246 residues long: Putative outer membrane protein YiaT (246 aa).

A signal peptide spans 1-21; the sequence is MLINRNIVALFALPFMASATA.

The protein belongs to the MipA/OmpV family.

It is found in the cell outer membrane. This Escherichia coli (strain K12) protein is Putative outer membrane protein YiaT (yiaT).